A 613-amino-acid chain; its full sequence is DNA polymerase II small subunit (613 aa).

Belongs to the DNA polymerase delta/II small subunit family. In terms of assembly, heterodimer of a large subunit and a small subunit.

It catalyses the reaction DNA(n) + a 2'-deoxyribonucleoside 5'-triphosphate = DNA(n+1) + diphosphate. The catalysed reaction is Exonucleolytic cleavage in the 3'- to 5'-direction to yield nucleoside 5'-phosphates.. Possesses two activities: a DNA synthesis (polymerase) and an exonucleolytic activity that degrades single-stranded DNA in the 3' to 5' direction. Has a template-primer preference which is characteristic of a replicative DNA polymerase. The polypeptide is DNA polymerase II small subunit (polB) (Pyrococcus furiosus (strain ATCC 43587 / DSM 3638 / JCM 8422 / Vc1)).